We begin with the raw amino-acid sequence, 686 residues long: Potassium-transporting ATPase ATP-binding subunit (686 aa).

2 helical membrane passes run 38–58 (VMFV…KDLV) and 64–84 (AAPL…VLFA). Residues 101-123 (ALRKMRKETTARRWKDGREERVP) form a disordered region. Over residues 107–123 (KETTARRWKDGREERVP) the composition is skewed to basic and acidic residues. A run of 2 helical transmembrane segments spans residues 224–244 (ILLV…VPLA) and 257–277 (VALL…AIGI). Residue Asp308 is the 4-aspartylphosphate intermediate of the active site. Residues Asp345, Glu349, 378-385 (FTAQTRMS), and Lys399 each bind ATP. Mg(2+) contacts are provided by Asp522 and Asp526. A run of 3 helical transmembrane segments spans residues 592–612 (FAIL…LNVM), 620–640 (AVLS…PLAL), and 666–686 (VIVP…VGLA).

This sequence belongs to the cation transport ATPase (P-type) (TC 3.A.3) family. Type IA subfamily. As to quaternary structure, the system is composed of three essential subunits: KdpA, KdpB and KdpC.

It is found in the cell membrane. It carries out the reaction K(+)(out) + ATP + H2O = K(+)(in) + ADP + phosphate + H(+). In terms of biological role, part of the high-affinity ATP-driven potassium transport (or Kdp) system, which catalyzes the hydrolysis of ATP coupled with the electrogenic transport of potassium into the cytoplasm. This subunit is responsible for energy coupling to the transport system and for the release of the potassium ions to the cytoplasm. In Myxococcus xanthus, this protein is Potassium-transporting ATPase ATP-binding subunit.